The sequence spans 87 residues: Small ribosomal subunit protein bS20 (87 aa).

The interval 1–24 is disordered; that stretch reads MANTAQARKRARQSVERNKHNSSL.

The protein belongs to the bacterial ribosomal protein bS20 family.

Its function is as follows. Binds directly to 16S ribosomal RNA. This Bordetella avium (strain 197N) protein is Small ribosomal subunit protein bS20.